A 180-amino-acid polypeptide reads, in one-letter code: 3-hydroxyanthranilate 3,4-dioxygenase (180 aa).

Arginine 46 is a binding site for O2. Residues histidine 50, glutamate 56, and histidine 94 each coordinate Fe cation. Substrate is bound at residue glutamate 56. Residues arginine 98 and glutamate 109 each contribute to the substrate site. The Fe cation site is built by cysteine 124, cysteine 127, cysteine 161, and cysteine 164.

This sequence belongs to the 3-HAO family. In terms of assembly, homodimer. Fe(2+) is required as a cofactor.

The catalysed reaction is 3-hydroxyanthranilate + O2 = (2Z,4Z)-2-amino-3-carboxymuconate 6-semialdehyde. It functions in the pathway cofactor biosynthesis; NAD(+) biosynthesis; quinolinate from L-kynurenine: step 3/3. In terms of biological role, catalyzes the oxidative ring opening of 3-hydroxyanthranilate to 2-amino-3-carboxymuconate semialdehyde, which spontaneously cyclizes to quinolinate. The polypeptide is 3-hydroxyanthranilate 3,4-dioxygenase (Ruegeria pomeroyi (strain ATCC 700808 / DSM 15171 / DSS-3) (Silicibacter pomeroyi)).